We begin with the raw amino-acid sequence, 931 residues long: Transportin (931 aa).

HEAT repeat units lie at residues 10–37, 42–79, 88–121, 127–164, 171–201, 214–241, 253–280, 296–421, 430–459, 471–498, 512–545, 553–586, 594–632, 640–693, 704–735, 743–776, 784–819, 827–860, and 869–900; these read GLKQLVYVLNLSNSTSREVHDQIREELD, VPDYNNYLTLIFKSNELQPHIRSVAGLVLKTNIKQYFE, YIKREILPVLSDPDASVRHTVGNIITNLIKKSCF, LLPALNLALDSNSQDLIEGSLYTLSLLCEDSTKKLDSD, NQLIPKLIMFFKCNNADFRKKALVSISYFII, FLKGIFSMSEDPSEAVRTNVCKTLVTLV, KDVIQYMLHATKDKSEEVALEACEFWTA, PVLV…LSGI, VTLPLIEQRMNEQNPWPVRESAILALGAIA, SKVIPYLINTLNDPKPLVRSITCWTLSR, LHPLVVNLLNRIVDNNKKVQEAACSAFATLEEEA, LQMILVTFVNAFGKYQAKNLLILYDAISTLAKVV, ELINILVPPLLQKFNALDDSNKNLLPLLGCLNQVCSSIG, SLFF…GIGT, LPHLLLQCMNLRGSDVLQSSFALLGDMSKFCL, PDYLNILTNNLYPEYLSVCNNASWAIGEIAIRMP, VAIRDRLISNINKVNLNRGVLENTAVTIGRLGIVSP, DKFIQCWCMAIRRKTDDIEKDSAFRGMWLIINNN, and VYICDAVASWDKMQPDLYEAYFKLLHMYKTSM. An Importin N-terminal domain is found at 32 to 99; the sequence is IREELDKFHS…KREILPVLSD (68 aa). A disordered region spans residues 317–401; the sequence is DQGDDSMTPD…DDDDDDDGFE (85 aa). Low complexity predominate over residues 358–381; sequence DNNNNSNNNNSSNNNSSNNNNNNN. Residues 382–401 are compositionally biased toward acidic residues; it reads NEDDEEYNDDDDDDDDDGFE.

Belongs to the importin beta family. Importin beta-2 subfamily. As to quaternary structure, forms a complex with an importin alpha subunit.

It localises to the cytoplasm. The protein localises to the nucleus envelope. Functionally, functions in nuclear protein import via a substrate-importin alpha-beta transport complex that passes though the nuclear pore complexes (NPC). Mediates docking of the substrate-importin complex to distinct nucleoporins. The chain is Transportin (tnpo) from Dictyostelium discoideum (Social amoeba).